Consider the following 482-residue polypeptide: Ras GTPase-activating protein-binding protein 2 (482 aa).

Positions 11-133 (VGREFVRQYY…FYVHNDMFRY (123 aa)) constitute an NTF2 domain. Positions 140–158 (DSEPELDEESEDEVEEEQE) are enriched in acidic residues. 2 disordered regions span residues 140–170 (DSEP…VQEN) and 187–318 (EPLE…EQND). Phosphoserine occurs at positions 141, 149, and 225. The interval 142–220 (EPELDEESED…PQVEEKHLEE (79 aa)) is acidic disordered region. Basic and acidic residues predominate over residues 191-225 (ESSHEPEPEPESETKTEELKPQVEEKHLEELEEKS). Position 227 is a phosphothreonine (threonine 227). Positions 247–264 (ASVTSKNLPPSGTVSSSG) are enriched in polar residues. Lysine 281 is covalently cross-linked (Glycyl lysine isopeptide (Lys-Gly) (interchain with G-Cter in SUMO2)). Residues 290 to 300 (RVREQRPRERP) show a composition bias toward basic and acidic residues. One can recognise an RRM domain in the interval 331-409 (HQLFVGNLPH…VRLNVEEKKT (79 aa)). N6-succinyllysine is present on lysine 392. Positions 404–476 (VEEKKTRAAR…GRGTGQMEGR (73 aa)) are RG-rich region. Positions 408-432 (KTRAARERETRGGGDDRRDIRRNDR) are enriched in basic and acidic residues. Residues 408-482 (KTRAARERET…MEGRFTGQRR (75 aa)) are disordered. The segment covering 433–445 (GPGGPRGIVGGGM) has biased composition (gly residues). Arginine 457 carries the omega-N-methylarginine modification. Serine 466 bears the Phosphoserine mark. Arginine 468 is subject to Omega-N-methylarginine.

In terms of assembly, forms homooligomers. Forms heterodimers with G3BP1. Interacts with NFKBIA (via N-terminus). Interacts (via NTF2 domain) with USP10; inhibiting stress granule formation. Interacts (via NTF2 domain) with CAPRIN1; promoting stress granule formation. Associates (via RG-rich region) with 40S ribosome subunits. Interacts with PABPC1.

It localises to the cytoplasm. Its subcellular location is the stress granule. Under physiological conditions, G3BP2 adopts a compact state that is stabilized by intramolecular interactions between the RG-rich and the acidic regions that inhibit phase separation. Upon stress, polysomes disassemble and mRNAs are released in an unfolded protein-free state. Binding of unfolded mRNA to G3BP2 outcompetes the intramolecular interactions and RNA-bound G3BP2 adopts an expanded conformation in which the RG-rich region becomes exposed to engage in protein-protein and protein-RNA interactions, allowing physical cross-linking of RNA molecules to form protein-RNA condensates, leading to liquid-liquid phase separation (LLPS). Functionally, scaffold protein that plays an essential role in cytoplasmic stress granule formation which acts as a platform for antiviral signaling. Plays an essential role in stress granule formation. Stress granules are membraneless compartments that store mRNAs and proteins, such as stalled translation pre-initiation complexes, in response to stress. Promotes formation of stress granules phase-separated membraneless compartment by undergoing liquid-liquid phase separation (LLPS) upon unfolded RNA-binding: functions as a molecular switch that triggers RNA-dependent LLPS in response to a rise in intracellular free RNA concentrations. The chain is Ras GTPase-activating protein-binding protein 2 (G3bp2) from Mus musculus (Mouse).